Here is a 507-residue protein sequence, read N- to C-terminus: ATP synthase subunit alpha, chloroplastic (507 aa).

170 to 177 (GDRQTGKT) is an ATP binding site.

Belongs to the ATPase alpha/beta chains family. As to quaternary structure, F-type ATPases have 2 components, CF(1) - the catalytic core - and CF(0) - the membrane proton channel. CF(1) has five subunits: alpha(3), beta(3), gamma(1), delta(1), epsilon(1). CF(0) has four main subunits: a, b, b' and c.

It is found in the plastid. Its subcellular location is the chloroplast thylakoid membrane. The enzyme catalyses ATP + H2O + 4 H(+)(in) = ADP + phosphate + 5 H(+)(out). Produces ATP from ADP in the presence of a proton gradient across the membrane. The alpha chain is a regulatory subunit. The chain is ATP synthase subunit alpha, chloroplastic from Acorus calamus var. americanus (American sweet flag).